Here is a 145-residue protein sequence, read N- to C-terminus: D-aminoacyl-tRNA deacylase (145 aa).

Residues 133–134 (GP) carry the Gly-cisPro motif, important for rejection of L-amino acids motif.

This sequence belongs to the DTD family. In terms of assembly, homodimer.

The protein localises to the cytoplasm. It carries out the reaction glycyl-tRNA(Ala) + H2O = tRNA(Ala) + glycine + H(+). The catalysed reaction is a D-aminoacyl-tRNA + H2O = a tRNA + a D-alpha-amino acid + H(+). Its function is as follows. An aminoacyl-tRNA editing enzyme that deacylates mischarged D-aminoacyl-tRNAs. Also deacylates mischarged glycyl-tRNA(Ala), protecting cells against glycine mischarging by AlaRS. Acts via tRNA-based rather than protein-based catalysis; rejects L-amino acids rather than detecting D-amino acids in the active site. By recycling D-aminoacyl-tRNA to D-amino acids and free tRNA molecules, this enzyme counteracts the toxicity associated with the formation of D-aminoacyl-tRNA entities in vivo and helps enforce protein L-homochirality. The protein is D-aminoacyl-tRNA deacylase of Cutibacterium acnes (strain DSM 16379 / KPA171202) (Propionibacterium acnes).